The following is a 350-amino-acid chain: MSDTSSPKPVASGEKFRTAQGITAIKDGQKRRASAEPQVFEPKPKWLRVKAPGGSRFEAVKRNVGEHRLSTVCQESHCPNMGECWSNGTATIMLMGSVCTRACRFCAVDTGNPNGWLDLEEPQNTAKSVELMALRYIVLTSVDRDDLEDGGASHYAACVRAIKENTPQVVVEALTPDFDGDHQAIERVVDSGLEVFAQNVETVKRLTHVVRDPRAGYEKTLKVLEHAKKHRPQVLTKTSLMLGLGETDEEILETMDDLRAIGVDILTLGQYLQPTRNHLKVQRWVSPEEFNRLRDIGLEKGFMEVAAGPLVRSSYRADRVFEKNNLGLAAPLPVPGQEVDASLIPALNLN.

The segment at 1–39 (MSDTSSPKPVASGEKFRTAQGITAIKDGQKRRASAEPQV) is disordered. 7 residues coordinate [4Fe-4S] cluster: C73, C78, C84, C99, C103, C106, and S314. In terms of domain architecture, Radical SAM core spans 85-303 (WSNGTATIML…RDIGLEKGFM (219 aa)).

It belongs to the radical SAM superfamily. Lipoyl synthase family. It depends on [4Fe-4S] cluster as a cofactor.

It localises to the cytoplasm. The enzyme catalyses [[Fe-S] cluster scaffold protein carrying a second [4Fe-4S](2+) cluster] + N(6)-octanoyl-L-lysyl-[protein] + 2 oxidized [2Fe-2S]-[ferredoxin] + 2 S-adenosyl-L-methionine + 4 H(+) = [[Fe-S] cluster scaffold protein] + N(6)-[(R)-dihydrolipoyl]-L-lysyl-[protein] + 4 Fe(3+) + 2 hydrogen sulfide + 2 5'-deoxyadenosine + 2 L-methionine + 2 reduced [2Fe-2S]-[ferredoxin]. Its pathway is protein modification; protein lipoylation via endogenous pathway; protein N(6)-(lipoyl)lysine from octanoyl-[acyl-carrier-protein]: step 2/2. Functionally, catalyzes the radical-mediated insertion of two sulfur atoms into the C-6 and C-8 positions of the octanoyl moiety bound to the lipoyl domains of lipoate-dependent enzymes, thereby converting the octanoylated domains into lipoylated derivatives. The chain is Lipoyl synthase from Ectopseudomonas mendocina (strain ymp) (Pseudomonas mendocina).